We begin with the raw amino-acid sequence, 183 residues long: Protein jagunal homolog 1 (183 aa).

Topologically, residues 1-39 are cytoplasmic; that stretch reads MASRAGPRAAGTDGSDFQHRERVAMHYQMSVTLKYEIKK. Serine 3 is modified (phosphoserine). The chain crosses the membrane as a helical span at residues 40 to 60; it reads LIYVHLVIWLLLVAKMSVGHL. The Lumenal segment spans residues 61-71; that stretch reads RLLSHDQVAMP. A helical transmembrane segment spans residues 72 to 92; it reads YQWEYPYLLSIVPSVLGLLSF. Residues 93–96 are Cytoplasmic-facing; it reads PRNN. Residues 97 to 117 traverse the membrane as a helical segment; that stretch reads ISYLVLSMISMGLFSIAPLIY. Over 118–137 the chain is Lumenal; sequence GSMEMFPAAQQLYRHGKAYR. The helical transmembrane segment at 138-158 threads the bilayer; sequence FLFGFSAVSVMYLVLVLAVQV. Topologically, residues 159–183 are cytoplasmic; it reads HAWQLYYSKKLLDSWFTSTQEKKRK.

This sequence belongs to the jagunal family. Interacts with COPA, COPB2 and COPG2.

The protein localises to the endoplasmic reticulum membrane. Its function is as follows. Endoplasmic reticulum transmembrane protein involved in vesicle-mediated transport, which is required for neutrophil function. Required for vesicle-mediated transport; it is however unclear whether it is involved in early secretory pathway or intracellular protein transport. Acts as a regulator of neutrophil function, probably via its role in vesicle-mediated transport: required for defense against fungal pathogens and for granulocyte colony-stimulating factor (GM-CSF) signaling pathway; possibly by regulating glycosylation and/or targeting of proteins contributing to the viability and migration of neutrophils. The protein is Protein jagunal homolog 1 of Mus musculus (Mouse).